The sequence spans 258 residues: Proteasome subunit alpha (258 aa).

This sequence belongs to the peptidase T1A family. The 20S proteasome core is composed of 14 alpha and 14 beta subunits that assemble into four stacked heptameric rings, resulting in a barrel-shaped structure. The two inner rings, each composed of seven catalytic beta subunits, are sandwiched by two outer rings, each composed of seven alpha subunits. The catalytic chamber with the active sites is on the inside of the barrel. Has a gated structure, the ends of the cylinder being occluded by the N-termini of the alpha-subunits. Is capped by the proteasome-associated ATPase, ARC.

It localises to the cytoplasm. It functions in the pathway protein degradation; proteasomal Pup-dependent pathway. Its activity is regulated as follows. The formation of the proteasomal ATPase ARC-20S proteasome complex, likely via the docking of the C-termini of ARC into the intersubunit pockets in the alpha-rings, may trigger opening of the gate for substrate entry. Interconversion between the open-gate and close-gate conformations leads to a dynamic regulation of the 20S proteasome proteolysis activity. In terms of biological role, component of the proteasome core, a large protease complex with broad specificity involved in protein degradation. The protein is Proteasome subunit alpha of Nocardia farcinica (strain IFM 10152).